We begin with the raw amino-acid sequence, 320 residues long: Malate dehydrogenase (320 aa).

Residues 10-15 (GSGMIG) and D34 contribute to the NAD(+) site. Substrate-binding residues include R83 and R89. Residues N96 and 119-121 (ITN) contribute to the NAD(+) site. The substrate site is built by N121 and R152. H176 (proton acceptor) is an active-site residue.

This sequence belongs to the LDH/MDH superfamily. MDH type 3 family.

The enzyme catalyses (S)-malate + NAD(+) = oxaloacetate + NADH + H(+). In terms of biological role, catalyzes the reversible oxidation of malate to oxaloacetate. This is Malate dehydrogenase from Rhizobium johnstonii (strain DSM 114642 / LMG 32736 / 3841) (Rhizobium leguminosarum bv. viciae).